The sequence spans 340 residues: Uroporphyrinogen decarboxylase (340 aa).

Residues 23–27 (RQAGR), Asp72, Tyr147, Thr202, and His316 each bind substrate.

It belongs to the uroporphyrinogen decarboxylase family. Homodimer.

It localises to the cytoplasm. The catalysed reaction is uroporphyrinogen III + 4 H(+) = coproporphyrinogen III + 4 CO2. Its pathway is porphyrin-containing compound metabolism; protoporphyrin-IX biosynthesis; coproporphyrinogen-III from 5-aminolevulinate: step 4/4. Its function is as follows. Catalyzes the decarboxylation of four acetate groups of uroporphyrinogen-III to yield coproporphyrinogen-III. The protein is Uroporphyrinogen decarboxylase of Geobacter metallireducens (strain ATCC 53774 / DSM 7210 / GS-15).